The chain runs to 176 residues: ATP synthase subunit delta (176 aa).

Belongs to the ATPase delta chain family. F-type ATPases have 2 components, F(1) - the catalytic core - and F(0) - the membrane proton channel. F(1) has five subunits: alpha(3), beta(3), gamma(1), delta(1), epsilon(1). F(0) has three main subunits: a(1), b(2) and c(10-14). The alpha and beta chains form an alternating ring which encloses part of the gamma chain. F(1) is attached to F(0) by a central stalk formed by the gamma and epsilon chains, while a peripheral stalk is formed by the delta and b chains.

Its subcellular location is the cell inner membrane. Its function is as follows. F(1)F(0) ATP synthase produces ATP from ADP in the presence of a proton or sodium gradient. F-type ATPases consist of two structural domains, F(1) containing the extramembraneous catalytic core and F(0) containing the membrane proton channel, linked together by a central stalk and a peripheral stalk. During catalysis, ATP synthesis in the catalytic domain of F(1) is coupled via a rotary mechanism of the central stalk subunits to proton translocation. In terms of biological role, this protein is part of the stalk that links CF(0) to CF(1). It either transmits conformational changes from CF(0) to CF(1) or is implicated in proton conduction. This chain is ATP synthase subunit delta, found in Campylobacter fetus subsp. fetus (strain 82-40).